We begin with the raw amino-acid sequence, 33 residues long: Photosystem II reaction center protein Psb30 (33 aa).

A helical transmembrane segment spans residues 5–25 (LIAQLTFLTSIIVSGPLVIAL).

This sequence belongs to the Psb30/Ycf12 family. PSII is composed of 1 copy each of membrane proteins PsbA, PsbB, PsbC, PsbD, PsbE, PsbF, PsbH, PsbI, PsbJ, PsbK, PsbL, PsbM, PsbT, PsbX, PsbY, PsbZ, Psb30/Ycf12, peripheral proteins of the oxygen-evolving complex and a large number of cofactors. It forms dimeric complexes.

Its subcellular location is the plastid. The protein localises to the chloroplast thylakoid membrane. Functionally, a core subunit of photosystem II (PSII), probably helps stabilize the reaction center. This is Photosystem II reaction center protein Psb30 from Psilotum nudum (Whisk fern).